Here is a 953-residue protein sequence, read N- to C-terminus: Homeobox protein LUMINIDEPENDENS (953 aa).

Residues 63–123 (KIGKRPRDLL…VTQKTRVRKQ (61 aa)) constitute a DNA-binding region (homeobox). A disordered region spans residues 404–430 (EQPGQKAAGKSPQTVRIGTSGRSRPMS). Polar residues predominate over residues 414–425 (SPQTVRIGTSGR). Tandem repeats lie at residues 498–502 (QPVNG), 507–511 (QPVNG), 516–520 (QPVNG), 525–529 (QPVNG), and 534–538 (QPVNG). The interval 498-538 (QPVNGFSTIQPVNGPSAVQPVNGPLAVQPVNGPSALQPVNG) is 5 X 5 AA repeats of Q-P-V-N-G. Disordered regions lie at residues 606-668 (NSKE…EPQD), 733-763 (APNSSSSSNKQVEERVEVSLPSPTPSTNPGM), and 861-953 (VGQM…KRWR). The segment covering 608–623 (KEADVQRNRNRRERET) has biased composition (basic and acidic residues). The span at 651–661 (PEIPSQQPPEE) shows a compositional bias: low complexity. Positions 733–742 (APNSSSSSNK) are enriched in polar residues. A compositionally biased stretch (low complexity) spans 869-884 (SSSWRSQQSQNSYYSH). Composition is skewed to polar residues over residues 888–934 (EIAS…QQQA) and 942–953 (THPYWNQNKRWR).

In terms of assembly, interacts with SUF4. As to expression, expressed in shoot apex, root apex, leaf primordia and floral buds.

Its subcellular location is the nucleus. Functionally, seems to play a role in the regulation of flowering time in the autonomous flowering pathway by repressing FLOWERING LOCUS C expression. The protein is Homeobox protein LUMINIDEPENDENS (LD) of Arabidopsis thaliana (Mouse-ear cress).